A 226-amino-acid polypeptide reads, in one-letter code: Exopolysaccharide production protein ExoY (226 aa).

A helical membrane pass occupies residues 34–54; it reads VLAASVALLLFSPLFLLIMAL.

This sequence belongs to the bacterial sugar transferase family.

It is found in the cell membrane. It participates in glycan metabolism; exopolysaccharide biosynthesis. In terms of biological role, needed for the addition of the first sugar (galactose) to the isoprenoid carrier. May function as a sugar transferase. The polypeptide is Exopolysaccharide production protein ExoY (exoY) (Rhizobium meliloti (strain 1021) (Ensifer meliloti)).